The sequence spans 880 residues: Alanine--tRNA ligase (880 aa).

Zn(2+)-binding residues include His567, His571, Cys669, and His673.

The protein belongs to the class-II aminoacyl-tRNA synthetase family. Zn(2+) serves as cofactor.

The protein localises to the cytoplasm. It catalyses the reaction tRNA(Ala) + L-alanine + ATP = L-alanyl-tRNA(Ala) + AMP + diphosphate. Its function is as follows. Catalyzes the attachment of alanine to tRNA(Ala) in a two-step reaction: alanine is first activated by ATP to form Ala-AMP and then transferred to the acceptor end of tRNA(Ala). Also edits incorrectly charged Ser-tRNA(Ala) and Gly-tRNA(Ala) via its editing domain. The chain is Alanine--tRNA ligase from Bacillus cereus (strain ZK / E33L).